Consider the following 727-residue polypeptide: Zinc metalloproteinase nas-38 (727 aa).

Residues 1–25 (MPSPSYNRHIIIASCFCCLLIFSSA) form the signal peptide. Positions 26–114 (ARVPKASKKH…FTQGKREKRK (89 aa)) are excised as a propeptide. The Peptidase M12A domain maps to 113-312 (RKIGRNPLYK…QAINMAYGCT (200 aa)). 2 cysteine pairs are disulfide-bonded: Cys158–Cys311 and Cys179–Cys199. His207 lines the Zn(2+) pocket. Residue Glu208 is part of the active site. Residues His211 and His217 each coordinate Zn(2+). The 40-residue stretch at 306–345 (NMAYGCTESCADLPCLRNGYTHPNNCSMCACPEGLSGRYC) folds into the EGF-like domain. A glycan (N-linked (GlcNAc...) asparagine) is linked at Asn330. The CUB domain maps to 353–469 (AQCGGVIFAT…AGFKAKFWSN (117 aa)). Intrachain disulfides connect Cys355-Cys383 and Cys411-Cys432. Disordered regions lie at residues 473–506 (PEGV…QSTT) and 532–561 (TPLT…TEPS). Low complexity predominate over residues 535-554 (TSSSTTTESTTVSSTTQSTT). Residues 610-658 (ECGCGAWSEWQGECSQQCGGCGHRLRKRECKKEACRKEEKRPCNFSACP) enclose the TSP type-1 domain. Cystine bridges form between Cys611/Cys644, Cys623/Cys652, Cys627/Cys657, and Cys639/Cys644. 2 N-linked (GlcNAc...) asparagine glycosylation sites follow: Asn653 and Asn714.

Zn(2+) serves as cofactor. Expressed in the epidermis, the excretory canal cell, duct cell, pore cell, and excretory gland cell. Expressed in an oscillating pattern in epithelial cells with increased expression during the lethargus phase which occurs during molting between larval and adult stages. Not expressed in seam cells or in the RIS neuron.

It is found in the secreted. Metalloprotease. As part of the innate immune response to molting and injury to the adult epidermis, positively regulates the activity of the transcription factor sta-2 to promote the expression of epidermal antimicrobial peptides such as nlp-29. Through regulating the expression of epidermal antimicrobial peptides such as nlp-29, modulates sleep duration and locomotion quiescence during the sleep-like state called lethargus which occurs during molting between larval and adult stages. This may occur through the sleep-active RIS neuron. The chain is Zinc metalloproteinase nas-38 from Caenorhabditis elegans.